Here is a 266-residue protein sequence, read N- to C-terminus: Hydroxypyruvate/pyruvate aldolase (266 aa).

H48 functions as the Proton acceptor in the catalytic mechanism. The a divalent metal cation site is built by E152 and D178.

It belongs to the HpcH/HpaI aldolase family. A divalent metal cation is required as a cofactor.

The enzyme catalyses D-glyceraldehyde + pyruvate = 2-dehydro-3-deoxy-L-galactonate. The catalysed reaction is 2-dehydro-3-deoxy-D-gluconate = D-glyceraldehyde + pyruvate. Its function is as follows. Aldolase which can catalyze in vitro the aldolisation reaction between hydroxypyruvate (HPA) or pyruvate (PA) and D-glyceraldehyde (D-GA). The condensation of pyruvate and D-glyceraldehyde produces 2-dehydro-3-deoxy-L-galactonate as the major product and 2-dehydro-3-deoxy-D-gluconate. Has weak activity with hydroxypyruvate and D-glyceraldehyde. This Agrobacterium fabrum (strain C58 / ATCC 33970) (Agrobacterium tumefaciens (strain C58)) protein is Hydroxypyruvate/pyruvate aldolase.